Here is a 953-residue protein sequence, read N- to C-terminus: ALS2 C-terminal-like protein (953 aa).

8 MORN repeats span residues 358–380, 381–403, 409–431, 432–452, 459–479, 483–505, 506–528, and 529–552; these read YEGE…DGRN, HVGN…QASE, YKCH…TDEV, YKGY…SGPQ, YTGH…DGDR, YIGM…AGVC, YQGT…DDSL, and YEGT…NGFT. Residues 796-942 form the VPS9 domain; sequence LFPDTQLLEF…IQKEDMRLHR (147 aa).

As to quaternary structure, homodimer. Forms a heteromeric complex with ALS2. Interacts with ALS2 and RAB5A. As to expression, expressed in heart and kidney.

The protein localises to the cytoplasm. In terms of biological role, acts as a guanine nucleotide exchange factor (GEF) for Rab5 GTPase. Regulates the ALS2-mediated endosome dynamics. In Homo sapiens (Human), this protein is ALS2 C-terminal-like protein (ALS2CL).